We begin with the raw amino-acid sequence, 723 residues long: uncharacterized protein (723 aa).

Basic residues predominate over residues 1 to 12; the sequence is MTGKKKNRHQKK. Disordered regions lie at residues 1–166, 181–212, 268–289, and 391–455; these read MTGK…EKEI, IKRK…SGWG, LPLS…DNDN, and KNKS…NTST. Positions 30-42 are enriched in low complexity; sequence DETTTTTTTTTTT. Composition is skewed to basic and acidic residues over residues 45 to 129 and 149 to 166; these read EETK…KTDD and TDIK…EKEI. The stretch at 53–173 forms a coiled coil; the sequence is IVENKDEDKK…KEIEDPNKKY (121 aa). Positions 181-190 are enriched in basic residues; it reads IKRKKEKKVK. Positions 193-204 are enriched in pro residues; it reads PVQPTPPVPAPA. Residues 272–288 show a composition bias toward acidic residues; that stretch reads DTEDSDNDNDNGGDDND. The segment covering 397 to 455 has biased composition (low complexity); that stretch reads DENNNNNNNNNQQQPQQQQTTSPTLSTSPTSPKSPTTTTTNTTTTTTTNTNNNNNNTST.

This is an uncharacterized protein from Dictyostelium discoideum (Social amoeba).